Reading from the N-terminus, the 207-residue chain is Small ribosomal subunit protein uS4 (207 aa).

Residues 29–38 (QDKAKFDSKP) are compositionally biased toward basic and acidic residues. Residues 29 to 54 (QDKAKFDSKPGQHGRTSGQRTSDYGL) are disordered. Positions 42 to 52 (GRTSGQRTSDY) are enriched in polar residues. In terms of domain architecture, S4 RNA-binding spans 97-160 (SRLDNVVYRM…KKQTRIAEAL (64 aa)).

This sequence belongs to the universal ribosomal protein uS4 family. As to quaternary structure, part of the 30S ribosomal subunit. Contacts protein S5. The interaction surface between S4 and S5 is involved in control of translational fidelity.

Its function is as follows. One of the primary rRNA binding proteins, it binds directly to 16S rRNA where it nucleates assembly of the body of the 30S subunit. Functionally, with S5 and S12 plays an important role in translational accuracy. The sequence is that of Small ribosomal subunit protein uS4 from Variovorax paradoxus (strain S110).